The sequence spans 549 residues: Polynucleotide 5'-hydroxyl-kinase nol-9 (549 aa).

190–197 (GHKGAGKS) contributes to the ATP binding site.

The protein belongs to the Clp1 family. NOL9/GRC3 subfamily.

Its subcellular location is the nucleus. It is found in the nucleolus. In terms of biological role, polynucleotide 5'-kinase involved in rRNA processing. The sequence is that of Polynucleotide 5'-hydroxyl-kinase nol-9 (nol-9) from Caenorhabditis elegans.